Reading from the N-terminus, the 70-residue chain is uncharacterized protein (70 aa).

This is an uncharacterized protein from Haloarcula hispanica (His1V).